We begin with the raw amino-acid sequence, 174 residues long: Protein COFACTOR ASSEMBLY OF COMPLEX C SUBUNIT B CCB3, chloroplastic (174 aa).

The N-terminal 39 residues, methionine 1 to valine 39, are a transit peptide targeting the chloroplast. Topologically, residues serine 40–threonine 78 are lumenal. A helical transmembrane segment spans residues alanine 79–leucine 99. Over arginine 100–tryptophan 147 the chain is Stromal. The helical transmembrane segment at phenylalanine 148–valine 168 threads the bilayer. The Lumenal segment spans residues serine 169–asparagine 174.

This sequence belongs to the YggT family.

Its subcellular location is the plastid. It is found in the chloroplast thylakoid membrane. Functionally, required for the biogenesis and accumulation of native cytochrome b6 in the thylakoid membrane. Controls the conversion of apocytochrome b6 to holocytochrome b6. Required for covalent binding of the c-type heme to cytochrome b6. The chain is Protein COFACTOR ASSEMBLY OF COMPLEX C SUBUNIT B CCB3, chloroplastic from Arabidopsis thaliana (Mouse-ear cress).